Reading from the N-terminus, the 193-residue chain is Large ribosomal subunit protein uL18 (193 aa).

It belongs to the universal ribosomal protein uL18 family. As to quaternary structure, part of the 50S ribosomal subunit. Contacts the 5S and 23S rRNAs.

In terms of biological role, this is one of the proteins that bind and probably mediate the attachment of the 5S RNA into the large ribosomal subunit, where it forms part of the central protuberance. In Methanosphaera stadtmanae (strain ATCC 43021 / DSM 3091 / JCM 11832 / MCB-3), this protein is Large ribosomal subunit protein uL18.